A 681-amino-acid polypeptide reads, in one-letter code: Chaperone protein htpG (681 aa).

An a; substrate-binding region spans residues M1–R326. Residues S327–N545 are b. The segment at I546 to I681 is c. Residues D601–K620 are disordered.

Belongs to the heat shock protein 90 family. In terms of assembly, homodimer.

It localises to the cytoplasm. Functionally, molecular chaperone. Has ATPase activity. This Bacteroides fragilis (strain 638R) protein is Chaperone protein htpG.